We begin with the raw amino-acid sequence, 290 residues long: Protease HtpX homolog (290 aa).

2 helical membrane passes run 5-27 and 32-51; these read MWLR…GYLF and VAFI…YWYS. Histidine 133 is a binding site for Zn(2+). Residue glutamate 134 is part of the active site. Residue histidine 137 participates in Zn(2+) binding. 2 helical membrane passes run 143 to 163 and 182 to 202; these read ILIG…AYWA and IIGA…IQAA. Residue glutamate 208 participates in Zn(2+) binding.

This sequence belongs to the peptidase M48B family. Zn(2+) serves as cofactor.

It localises to the cell membrane. This Thermococcus kodakarensis (strain ATCC BAA-918 / JCM 12380 / KOD1) (Pyrococcus kodakaraensis (strain KOD1)) protein is Protease HtpX homolog.